We begin with the raw amino-acid sequence, 239 residues long: Phosphoribosylaminoimidazole-succinocarboxamide synthase (239 aa).

It belongs to the SAICAR synthetase family.

It carries out the reaction 5-amino-1-(5-phospho-D-ribosyl)imidazole-4-carboxylate + L-aspartate + ATP = (2S)-2-[5-amino-1-(5-phospho-beta-D-ribosyl)imidazole-4-carboxamido]succinate + ADP + phosphate + 2 H(+). The protein operates within purine metabolism; IMP biosynthesis via de novo pathway; 5-amino-1-(5-phospho-D-ribosyl)imidazole-4-carboxamide from 5-amino-1-(5-phospho-D-ribosyl)imidazole-4-carboxylate: step 1/2. This chain is Phosphoribosylaminoimidazole-succinocarboxamide synthase, found in Campylobacter hominis (strain ATCC BAA-381 / DSM 21671 / CCUG 45161 / LMG 19568 / NCTC 13146 / CH001A).